The sequence spans 321 residues: Phosphate acyltransferase (321 aa).

This sequence belongs to the PlsX family. As to quaternary structure, homodimer. Probably interacts with PlsY.

The protein localises to the cytoplasm. The catalysed reaction is a fatty acyl-[ACP] + phosphate = an acyl phosphate + holo-[ACP]. It participates in lipid metabolism; phospholipid metabolism. In terms of biological role, catalyzes the reversible formation of acyl-phosphate (acyl-PO(4)) from acyl-[acyl-carrier-protein] (acyl-ACP). This enzyme utilizes acyl-ACP as fatty acyl donor, but not acyl-CoA. The protein is Phosphate acyltransferase of Chlamydia trachomatis serovar A (strain ATCC VR-571B / DSM 19440 / HAR-13).